Here is an 89-residue protein sequence, read N- to C-terminus: Small ribosomal subunit protein uS15 (89 aa).

It belongs to the universal ribosomal protein uS15 family. In terms of assembly, part of the 30S ribosomal subunit. Forms a bridge to the 50S subunit in the 70S ribosome, contacting the 23S rRNA.

Functionally, one of the primary rRNA binding proteins, it binds directly to 16S rRNA where it helps nucleate assembly of the platform of the 30S subunit by binding and bridging several RNA helices of the 16S rRNA. Forms an intersubunit bridge (bridge B4) with the 23S rRNA of the 50S subunit in the ribosome. This Latilactobacillus sakei subsp. sakei (strain 23K) (Lactobacillus sakei subsp. sakei) protein is Small ribosomal subunit protein uS15.